The primary structure comprises 197 residues: U1 small nuclear ribonucleoprotein C (197 aa).

Residues 4–36 form a Matrin-type zinc finger; that stretch reads YYCEYCDIYLTHSSPVGRRQHNQGRKHISAKIE. Over residues 128–137 the composition is skewed to low complexity; sequence FHNNKRINNI. The interval 128-178 is disordered; the sequence is FHNNKRINNIPKPYNNYTNKPITNSSYKNDKQDYRNNNESNDNMNSNNFSN. The span at 142–154 shows a compositional bias: polar residues; that stretch reads NNYTNKPITNSSY. A compositionally biased stretch (low complexity) spans 164-178; it reads NNESNDNMNSNNFSN.

The protein belongs to the U1 small nuclear ribonucleoprotein C family. In terms of assembly, U1 snRNP is composed of the 7 core Sm proteins B/B', D1, D2, D3, E, F and G that assemble in a heptameric protein ring on the Sm site of the small nuclear RNA to form the core snRNP, and at least 3 U1 snRNP-specific proteins U1-70K, U1-A and U1-C. U1-C interacts with U1 snRNA and the 5' splice-site region of the pre-mRNA.

Its subcellular location is the nucleus. Component of the spliceosomal U1 snRNP, which is essential for recognition of the pre-mRNA 5' splice-site and the subsequent assembly of the spliceosome. U1-C is directly involved in initial 5' splice-site recognition for both constitutive and regulated alternative splicing. The interaction with the 5' splice-site seems to precede base-pairing between the pre-mRNA and the U1 snRNA. Stimulates commitment or early (E) complex formation by stabilizing the base pairing of the 5' end of the U1 snRNA and the 5' splice-site region. The polypeptide is U1 small nuclear ribonucleoprotein C (SNRPC) (Plasmodium berghei (strain Anka)).